The chain runs to 294 residues: Protease HtpX homolog 2 (294 aa).

2 helical membrane-spanning segments follow: residues 15–35 and 36–56; these read MLFTMFLLAAVYLFFLAFLSY and YGTSQIFIILFIGLFMAAQYF. Histidine 140 contacts Zn(2+). Glutamate 141 is an active-site residue. Histidine 144 lines the Zn(2+) pocket. 2 helical membrane-spanning segments follow: residues 151–171 and 185–205; these read AVLTIASFLSSVAFYIVRYSL and GGIMLVWLVSIVVWIVSFLLI. Residue glutamate 213 coordinates Zn(2+).

The protein belongs to the peptidase M48B family. Zn(2+) is required as a cofactor.

Its subcellular location is the cell membrane. This is Protease HtpX homolog 2 from Methanosarcina mazei (strain ATCC BAA-159 / DSM 3647 / Goe1 / Go1 / JCM 11833 / OCM 88) (Methanosarcina frisia).